The sequence spans 359 residues: Uroporphyrinogen decarboxylase (359 aa).

Residues 36–40 (RQAGR), Asp-85, Tyr-160, Ser-215, and His-338 each bind substrate.

Belongs to the uroporphyrinogen decarboxylase family. As to quaternary structure, homodimer.

The protein resides in the cytoplasm. It catalyses the reaction uroporphyrinogen III + 4 H(+) = coproporphyrinogen III + 4 CO2. Its pathway is porphyrin-containing compound metabolism; protoporphyrin-IX biosynthesis; coproporphyrinogen-III from 5-aminolevulinate: step 4/4. Its function is as follows. Catalyzes the decarboxylation of four acetate groups of uroporphyrinogen-III to yield coproporphyrinogen-III. This Corynebacterium efficiens (strain DSM 44549 / YS-314 / AJ 12310 / JCM 11189 / NBRC 100395) protein is Uroporphyrinogen decarboxylase.